The following is a 168-amino-acid chain: Transcription antitermination protein NusB (168 aa).

This sequence belongs to the NusB family.

Its function is as follows. Involved in transcription antitermination. Required for transcription of ribosomal RNA (rRNA) genes. Binds specifically to the boxA antiterminator sequence of the ribosomal RNA (rrn) operons. This Brucella anthropi (strain ATCC 49188 / DSM 6882 / CCUG 24695 / JCM 21032 / LMG 3331 / NBRC 15819 / NCTC 12168 / Alc 37) (Ochrobactrum anthropi) protein is Transcription antitermination protein NusB.